We begin with the raw amino-acid sequence, 188 residues long: Guanylate kinase (188 aa).

One can recognise a Guanylate kinase-like domain in the interval 2–183; that stretch reads TKLIIISAPS…CVEQIRKAIA (182 aa). Residue 9-16 participates in ATP binding; that stretch reads APSGTGKS.

It belongs to the guanylate kinase family.

The protein localises to the cytoplasm. The enzyme catalyses GMP + ATP = GDP + ADP. Essential for recycling GMP and indirectly, cGMP. The protein is Guanylate kinase of Porphyromonas gingivalis (strain ATCC BAA-308 / W83).